We begin with the raw amino-acid sequence, 607 residues long: V-type proton ATPase catalytic subunit A (607 aa).

Residue 251–258 (GAFGCGKT) coordinates ATP.

It belongs to the ATPase alpha/beta chains family. In terms of assembly, V-ATPase is a heteromultimeric enzyme composed of a peripheral catalytic V1 complex (components A to H) attached to an integral membrane V0 proton pore complex (components: a, c, c', c'', d, e, f and VOA1).

The protein resides in the vacuole membrane. The catalysed reaction is ATP + H2O + 4 H(+)(in) = ADP + phosphate + 5 H(+)(out). Catalytic subunit of the V1 complex of vacuolar(H+)-ATPase (V-ATPase), a multisubunit enzyme composed of a peripheral complex (V1) that hydrolyzes ATP and a membrane integral complex (V0) that translocates protons. V-ATPase is responsible for acidifying and maintaining the pH of intracellular compartments. This Encephalitozoon cuniculi (strain GB-M1) (Microsporidian parasite) protein is V-type proton ATPase catalytic subunit A (VMA1).